Reading from the N-terminus, the 76-residue chain is UPF0248 protein MmarC6_0667 (76 aa).

Belongs to the UPF0248 family.

This Methanococcus maripaludis (strain C6 / ATCC BAA-1332) protein is UPF0248 protein MmarC6_0667.